The sequence spans 358 residues: Ion-translocating oxidoreductase complex subunit D (358 aa).

7 helical membrane-spanning segments follow: residues 16-36 (VSRTMLTVVAALTPATLFGLW), 38-58 (FGWPAIFLFLTTVVSAWVFEV), 68-90 (IRPFATDGSAILSGWLVAMTLPP), 128-148 (AMLVVALPVQMTTWIAPVGLL), 206-226 (FVPGSLGETSTVLLALGGLLL), 236-256 (IPLAVLGTLVTLSAICSFLAP), and 286-306 (PVTTAGKWVYGIGIGTLVFVI).

This sequence belongs to the NqrB/RnfD family. The complex is composed of six subunits: RnfA, RnfB, RnfC, RnfD, RnfE and RnfG. Requires FMN as cofactor.

The protein localises to the cellular chromatophore membrane. Functionally, part of a membrane-bound complex that couples electron transfer with translocation of ions across the membrane. Required for nitrogen fixation. Involved in electron transfer to nitrogenase. This Rhodobacter capsulatus (Rhodopseudomonas capsulata) protein is Ion-translocating oxidoreductase complex subunit D.